The following is a 339-amino-acid chain: SVP1-like protein 2 (339 aa).

2 WD repeats span residues Ala177–Glu217 and Leu222–Arg261.

It belongs to the WD repeat PROPPIN family.

The protein resides in the vacuole membrane. The protein localises to the cytoplasmic vesicle membrane. Involved in mitochondrial or peroxisomal functions and amino acid signaling pathways. This chain is SVP1-like protein 2 (HSV2), found in Kluyveromyces lactis (strain ATCC 8585 / CBS 2359 / DSM 70799 / NBRC 1267 / NRRL Y-1140 / WM37) (Yeast).